A 699-amino-acid chain; its full sequence is D-(-)-3-hydroxybutyrate oligomer hydrolase (699 aa).

The first 33 residues, Met1–Ala33, serve as a signal peptide directing secretion. The Charge relay system role is filled by Ser311.

This sequence belongs to the D-(-)-3-hydroxybutyrate oligomer hydrolase family.

The protein resides in the secreted. It carries out the reaction (3R)-hydroxybutanoate dimer + H2O = 2 (R)-3-hydroxybutanoate + H(+). Its pathway is lipid metabolism; butanoate metabolism. Participates in the degradation of poly-3-hydroxybutyrate (PHB). It works downstream of poly(3-hydroxybutyrate) depolymerase, hydrolyzing D(-)-3-hydroxybutyrate oligomers of various length (3HB-oligomers) into 3HB-monomers. This chain is D-(-)-3-hydroxybutyrate oligomer hydrolase, found in Burkholderia pseudomallei (strain 1710b).